A 369-amino-acid polypeptide reads, in one-letter code: Aminomethyltransferase (369 aa).

It belongs to the GcvT family. In terms of assembly, the glycine cleavage system is composed of four proteins: P, T, L and H.

The enzyme catalyses N(6)-[(R)-S(8)-aminomethyldihydrolipoyl]-L-lysyl-[protein] + (6S)-5,6,7,8-tetrahydrofolate = N(6)-[(R)-dihydrolipoyl]-L-lysyl-[protein] + (6R)-5,10-methylene-5,6,7,8-tetrahydrofolate + NH4(+). The glycine cleavage system catalyzes the degradation of glycine. The chain is Aminomethyltransferase from Xanthomonas campestris pv. campestris (strain 8004).